The sequence spans 141 residues: Proteasome maturation protein (141 aa).

Lys39 is covalently cross-linked (Glycyl lysine isopeptide (Lys-Gly) (interchain with G-Cter in SUMO2)). The short motif at 68 to 72 (RNIQG) is the High-affinity association with the preproteasome element.

The protein belongs to the POMP/UMP1 family. Constituent of preproteasomes, but not of mature 20S proteasomes. Within the preproteasome, may directly interact with PSMB1/beta6, PSMB4/beta7, PSMB5/beta5, PSMB6/beta1 and PSMB9/beta1i. Interaction with PSMB8/beta5i has been observed in PubMed:10973495, but not in PubMed:10926487. Forms tetramers. As to expression, strongly expressed from the basal layer to the granular layer of healthy epidermis, whereas in KLICK patients there is a gradual decrease of expression toward the granular layer.

The protein localises to the cytoplasm. The protein resides in the cytosol. It is found in the nucleus. Its subcellular location is the microsome membrane. In terms of biological role, molecular chaperone essential for the assembly of standard proteasomes and immunoproteasomes. Degraded after completion of proteasome maturation. Mediates the association of 20S preproteasome with the endoplasmic reticulum. This is Proteasome maturation protein from Homo sapiens (Human).